The primary structure comprises 220 residues: Kinetochore protein Spc25 (220 aa).

The stretch at 41-119 forms a coiled coil; that stretch reads ILLDVKEAAA…NEIMERIHTL (79 aa).

This sequence belongs to the SPC25 family. In terms of assembly, component of the Ndc80 complex, which is composed of Ndc80, Nuf2 and Spc25.

The protein localises to the nucleus. It is found in the chromosome. The protein resides in the centromere. Its subcellular location is the kinetochore. In terms of biological role, acts as a component of the essential kinetochore-associated Ndc80 complex, which is required for chromosome segregation and spindle checkpoint activity during meiosis and mitosis. Required for kinetochore integrity and the organization of stable microtubule binding sites in the outer plate of the kinetochore. Participates in SAC signaling that responds specifically to disruptions in spindle microtubule dynamics. The NDC80 complex synergistically enhances the affinity of the SKA1 complex for microtubules and may allow the NDC80 complex to track depolymerizing microtubules. This chain is Kinetochore protein Spc25, found in Drosophila erecta (Fruit fly).